A 294-amino-acid chain; its full sequence is Fatty acyl-CoA reductase Rv0547c (294 aa).

Ser49, Ser50, Ile52, Arg72, Asp97, Leu98, Asn124, Tyr192, Lys196, Val225, and Thr227 together coordinate NADP(+). Tyr192 acts as the Proton acceptor in catalysis.

This sequence belongs to the short-chain dehydrogenases/reductases (SDR) family.

It is found in the host mitochondrion. The enzyme catalyses hexadecanal + NADP(+) + CoA = hexadecanoyl-CoA + NADPH + H(+). Its function is as follows. Oxidoreductase that promotes the persistence of M.tuberculosis in host macrophages by reprogramming the fatty acid metabolism in host mitochondria. When localized in the host mitochondria, it potentially acts on unknown lipid substrates and converts them into products that directly or indirectly alter the lipid profile of the mitochondria. This change in lipid profile results in increased mitochondrial membrane fluidity, enhanced endogenous fatty acid oxidation and increased mitochondrial spare respiratory capacity. All these events eventually favor M.tuberculosis persistence in the host macrophages. In vitro, can catalyze the NADPH-dependent reduction of palmitoyl-CoA (hexadecanoyl-CoA). This is Fatty acyl-CoA reductase Rv0547c from Mycobacterium tuberculosis (strain ATCC 25618 / H37Rv).